Consider the following 175-residue polypeptide: Peptide deformylase (175 aa).

Residues Cys-98 and His-140 each contribute to the Fe cation site. Glu-141 is a catalytic residue. His-144 lines the Fe cation pocket.

The protein belongs to the polypeptide deformylase family. Fe(2+) serves as cofactor.

The catalysed reaction is N-terminal N-formyl-L-methionyl-[peptide] + H2O = N-terminal L-methionyl-[peptide] + formate. In terms of biological role, removes the formyl group from the N-terminal Met of newly synthesized proteins. Requires at least a dipeptide for an efficient rate of reaction. N-terminal L-methionine is a prerequisite for activity but the enzyme has broad specificity at other positions. This Bradyrhizobium sp. (strain ORS 278) protein is Peptide deformylase.